Consider the following 138-residue polypeptide: Transcription antitermination protein NusB (138 aa).

It belongs to the NusB family.

Involved in transcription antitermination. Required for transcription of ribosomal RNA (rRNA) genes. Binds specifically to the boxA antiterminator sequence of the ribosomal RNA (rrn) operons. This is Transcription antitermination protein NusB from Helicobacter pylori (strain Shi470).